The sequence spans 187 residues: Peptidoglycan-recognition protein 2 (187 aa).

A signal peptide spans 1–19 (MKAFLVALVVAIELTLVFA). 2 cysteine pairs are disulfide-bonded: Cys21/Cys144 and Cys58/Cys64. The N-acetylmuramoyl-L-alanine amidase domain occupies 43-170 (KPLKYVIIHH…RTVRPTDSPG (128 aa)).

The protein belongs to the N-acetylmuramoyl-L-alanine amidase 2 family. In terms of tissue distribution, localizes to plasma (at protein level).

The protein localises to the secreted. Functionally, peptidoglycan-recognition protein probably involved in innate immunity by binding to peptidoglycans (PGN) of bacteria and activating the prophenoloxidase (proPO) cascade immune response. Binds to 1,3-beta-D-glucan and PGN. The sequence is that of Peptidoglycan-recognition protein 2 (PGRP-2) from Holotrichia diomphalia (Korean black chafer).